Consider the following 926-residue polypeptide: OTU domain-containing protein 7A (926 aa).

At S121 the chain carries Phosphoserine. A TRAF-binding region spans residues 170 to 413 (ERDLIEQATM…AVDPGKDWEW (244 aa)). The catalytic stretch occupies residues 185–452 (AGRLNWWSTV…VTWIRIPSET (268 aa)). The 177-residue stretch at 201-377 (LLPLATTGDG…QAHFSALVSM (177 aa)) folds into the OTU domain. Residue D209 is part of the active site. C212 acts as the Nucleophile in catalysis. Catalysis depends on H370, which acts as the Proton acceptor. Disordered regions lie at residues 455 to 517 (PLAQ…DSVA), 540 to 615 (GLVH…GDAW), and 671 to 779 (EQEQ…ARQS). The span at 484–494 (VCSNSNSNNGK) shows a compositional bias: low complexity. The span at 495 to 513 (NGKDKEKEKQRKDKDKTRA) shows a compositional bias: basic and acidic residues. The Nuclear localization signal motif lies at 497–512 (KDKEKEKQRKDKDKTR). Low complexity-rich tracts occupy residues 579-595 (GASA…PSPT), 680-691 (AAAAAAATATAT), and 731-750 (SPGT…AASP). Residues 751–767 (GPGGGARRAAPGTGGPT) are compositionally biased toward gly residues. R880 carries the omega-N-methylarginine modification. An A20-type zinc finger spans residues 884–919 (GPAQRRCQRENCAFYGRAETEHFCSYCYREELRRRR). Zn(2+) is bound by residues C890, C895, C907, and C910.

This sequence belongs to the peptidase C64 family.

The protein resides in the cytoplasm. It localises to the nucleus. The catalysed reaction is Thiol-dependent hydrolysis of ester, thioester, amide, peptide and isopeptide bonds formed by the C-terminal Gly of ubiquitin (a 76-residue protein attached to proteins as an intracellular targeting signal).. Functionally, deubiquitinase, which cleaves 'Lys-11'-linked polyubiquitin chains. This Mus musculus (Mouse) protein is OTU domain-containing protein 7A (Otud7a).